The sequence spans 1209 residues: Protein FAM83H (1209 aa).

A DUF1669 region spans residues 1-286 (MARRSQSSSQ…LFAQSEPLVP (286 aa)). Positions 1–286 (MARRSQSSSQ…LFAQSEPLVP (286 aa)) are mediates interaction with CSNK1A1 and is required for FAM83H activity in keratin cytoskeleton organization. 6 positions are modified to phosphoserine: Ser-512, Ser-513, Ser-515, Ser-522, Ser-639, and Ser-660. Disordered stretches follow at residues 512–545 (SSASREVRHGSDPAFGPSPRGLEPSGASRPNLGQ), 615–664 (RDLL…FRSR), and 735–760 (KGPARDPGGAGGAVTSSSHSKAVVSQ). Thr-749 bears the Phosphothreonine mark. Residues Ser-752, Ser-778, Ser-806, and Ser-871 each carry the phosphoserine modification. A disordered region spans residues 829–1056 (AQGRSLSPQG…EERGSRVRLA (228 aa)). Residue Thr-873 is modified to Phosphothreonine. 4 positions are modified to phosphoserine: Ser-882, Ser-893, Ser-904, and Ser-915. Over residues 915–942 (SPTSGFPNRRGSPTTGLMEQKGSPTSTY) the composition is skewed to polar residues. Position 917 is a phosphothreonine (Thr-917). Ser-926 carries the phosphoserine modification. A Phosphothreonine modification is found at Thr-928. Phosphoserine occurs at positions 937, 948, 959, 970, 977, 1035, 1041, and 1057. A Phosphothreonine modification is found at Thr-1072. Disordered stretches follow at residues 1076–1147 (LEQI…EERD) and 1174–1193 (EAGSSGAGDNLADEDTRDSK). A phosphoserine mark is found at Ser-1080, Ser-1098, and Ser-1177.

It belongs to the FAM83 family. Directly interacts (via DUF1669) with casein kinase isoforms CSNK1A1, CSNK1A1L, CSNK1D and CSNK1E. Interaction with CSNK1A1 recruits CSNK1A1 to keratin filaments. Interacts with KRT18 and probably other keratins. In terms of tissue distribution, expressed in tooth follicle, eye, liver and kidney.

The protein localises to the cytoplasm. It is found in the cytoskeleton. Its function is as follows. May play a major role in the structural organization and calcification of developing enamel. May play a role in keratin cytoskeleton disassembly by recruiting CSNK1A1 to keratin filaments. Thereby, it may regulate epithelial cell migration. This Mus musculus (Mouse) protein is Protein FAM83H.